A 448-amino-acid chain; its full sequence is Phosphoglucosamine mutase (448 aa).

Serine 100 (phosphoserine intermediate) is an active-site residue. Residues serine 100, aspartate 240, aspartate 242, and aspartate 244 each coordinate Mg(2+). The residue at position 100 (serine 100) is a Phosphoserine.

Belongs to the phosphohexose mutase family. Mg(2+) is required as a cofactor. In terms of processing, activated by phosphorylation.

It carries out the reaction alpha-D-glucosamine 1-phosphate = D-glucosamine 6-phosphate. Catalyzes the conversion of glucosamine-6-phosphate to glucosamine-1-phosphate. This is Phosphoglucosamine mutase from Bacillus pumilus (strain SAFR-032).